A 279-amino-acid polypeptide reads, in one-letter code: Large ribosomal subunit protein mL46 (279 aa).

N6-acetyllysine is present on K230.

This sequence belongs to the mitochondrion-specific ribosomal protein mL46 family. Component of the mitochondrial large ribosomal subunit (mt-LSU). Mature mammalian 55S mitochondrial ribosomes consist of a small (28S) and a large (39S) subunit. The 28S small subunit contains a 12S ribosomal RNA (12S mt-rRNA) and 30 different proteins. The 39S large subunit contains a 16S rRNA (16S mt-rRNA), a copy of mitochondrial valine transfer RNA (mt-tRNA(Val)), which plays an integral structural role, and 52 different proteins. mL46 is located at the central protuberance.

It is found in the mitochondrion. The polypeptide is Large ribosomal subunit protein mL46 (MRPL46) (Homo sapiens (Human)).